We begin with the raw amino-acid sequence, 163 residues long: NADH-quinone oxidoreductase subunit I (163 aa).

4Fe-4S ferredoxin-type domains follow at residues 54 to 84 and 94 to 123; these read LRRY…IDSH and TRYD…LTRL. The [4Fe-4S] cluster site is built by Cys64, Cys67, Cys70, Cys74, Cys103, Cys106, Cys109, and Cys113.

Belongs to the complex I 23 kDa subunit family. As to quaternary structure, NDH-1 is composed of 14 different subunits. Subunits NuoA, H, J, K, L, M, N constitute the membrane sector of the complex. The cofactor is [4Fe-4S] cluster.

The protein resides in the cell inner membrane. The catalysed reaction is a quinone + NADH + 5 H(+)(in) = a quinol + NAD(+) + 4 H(+)(out). In terms of biological role, NDH-1 shuttles electrons from NADH, via FMN and iron-sulfur (Fe-S) centers, to quinones in the respiratory chain. The immediate electron acceptor for the enzyme in this species is believed to be ubiquinone. Couples the redox reaction to proton translocation (for every two electrons transferred, four hydrogen ions are translocated across the cytoplasmic membrane), and thus conserves the redox energy in a proton gradient. The chain is NADH-quinone oxidoreductase subunit I from Halorhodospira halophila (strain DSM 244 / SL1) (Ectothiorhodospira halophila (strain DSM 244 / SL1)).